Consider the following 162-residue polypeptide: Phenazine biosynthesis protein PhzB1 (162 aa).

It belongs to the PhzA/PhzB family. As to quaternary structure, homodimer.

It functions in the pathway antibiotic biosynthesis; phenazine biosynthesis. Involved in the biosynthesis of the antibiotic phenazine, a nitrogen-containing heterocyclic molecule. PhzB1 (operon phzA1B1C1E1F1G1) has a role in the biosynthesis of the phenazine during planktonic growth. The polypeptide is Phenazine biosynthesis protein PhzB1 (Pseudomonas aeruginosa (strain ATCC 15692 / DSM 22644 / CIP 104116 / JCM 14847 / LMG 12228 / 1C / PRS 101 / PAO1)).